A 627-amino-acid chain; its full sequence is DNA mismatch repair protein MutL (627 aa).

The disordered stretch occupies residues 363–397 (FAEPAAREPVAPRYSPAPASGSRPAAPWPNAQPGY). The segment covering 364–387 (AEPAAREPVAPRYSPAPASGSRPA) has biased composition (low complexity).

The protein belongs to the DNA mismatch repair MutL/HexB family.

Its function is as follows. This protein is involved in the repair of mismatches in DNA. It is required for dam-dependent methyl-directed DNA mismatch repair. May act as a 'molecular matchmaker', a protein that promotes the formation of a stable complex between two or more DNA-binding proteins in an ATP-dependent manner without itself being part of a final effector complex. This is DNA mismatch repair protein MutL from Shigella flexneri serotype 5b (strain 8401).